Consider the following 255-residue polypeptide: MLRAHNLHIRRGRKTVLADVSLQLEPGEVLGVLGPNGAGKSTLLGALCGELSAHEGDVLLDGEALSRWSGTQRAQRLAVLPQVSTLDFAFRVEEVVGMGRLPYQSGRVRDDEIVAAALRAADAGHLSGRSYLALSGGERQRVHLARVLAQLWPGQAGQTLLLDEPTSMLDPLHQHTTLQAVREFADRGAAVLVILHDLNLAARYCDRILLLEGGRPVALDTPQQVLRPESLKAVFGLEVLVQTHPERGHPLIIAR.

An ABC transporter domain is found at 2-238 (LRAHNLHIRR…ESLKAVFGLE (237 aa)). 34–41 (GPNGAGKS) is an ATP binding site.

The protein belongs to the ABC transporter superfamily. Heme (hemin) importer (TC 3.A.1.14.5) family. In terms of assembly, the complex is composed of two ATP-binding proteins (HmuV), two transmembrane proteins (HmuU) and a solute-binding protein (HmuT).

The protein localises to the cell inner membrane. Functionally, part of the ABC transporter complex HmuTUV involved in hemin import. Responsible for energy coupling to the transport system. The chain is Hemin import ATP-binding protein HmuV from Pseudomonas fluorescens (strain Pf0-1).